The sequence spans 206 residues: Peptidyl-tRNA hydrolase (206 aa).

Tyrosine 14 serves as a coordination point for tRNA. Histidine 19 (proton acceptor) is an active-site residue. Residues phenylalanine 64 and asparagine 66 each contribute to the tRNA site. Residues valine 185 to arginine 206 are disordered. The segment covering alanine 189–arginine 206 has biased composition (basic and acidic residues).

The protein belongs to the PTH family. In terms of assembly, monomer.

It is found in the cytoplasm. It carries out the reaction an N-acyl-L-alpha-aminoacyl-tRNA + H2O = an N-acyl-L-amino acid + a tRNA + H(+). In terms of biological role, hydrolyzes ribosome-free peptidyl-tRNAs (with 1 or more amino acids incorporated), which drop off the ribosome during protein synthesis, or as a result of ribosome stalling. Catalyzes the release of premature peptidyl moieties from peptidyl-tRNA molecules trapped in stalled 50S ribosomal subunits, and thus maintains levels of free tRNAs and 50S ribosomes. This chain is Peptidyl-tRNA hydrolase, found in Herpetosiphon aurantiacus (strain ATCC 23779 / DSM 785 / 114-95).